Reading from the N-terminus, the 89-residue chain is Small ribosomal subunit protein uS15 (89 aa).

Belongs to the universal ribosomal protein uS15 family. In terms of assembly, part of the 30S ribosomal subunit. Forms a bridge to the 50S subunit in the 70S ribosome, contacting the 23S rRNA.

In terms of biological role, one of the primary rRNA binding proteins, it binds directly to 16S rRNA where it helps nucleate assembly of the platform of the 30S subunit by binding and bridging several RNA helices of the 16S rRNA. Forms an intersubunit bridge (bridge B4) with the 23S rRNA of the 50S subunit in the ribosome. The chain is Small ribosomal subunit protein uS15 from Streptococcus mutans serotype c (strain ATCC 700610 / UA159).